The sequence spans 322 residues: Ferrochelatase (322 aa).

Fe cation is bound by residues His193 and Glu274.

It belongs to the ferrochelatase family.

It is found in the cytoplasm. It carries out the reaction heme b + 2 H(+) = protoporphyrin IX + Fe(2+). Its pathway is porphyrin-containing compound metabolism; protoheme biosynthesis; protoheme from protoporphyrin-IX: step 1/1. Its function is as follows. Catalyzes the ferrous insertion into protoporphyrin IX. The sequence is that of Ferrochelatase from Aliivibrio fischeri (strain MJ11) (Vibrio fischeri).